The chain runs to 37 residues: Large ribosomal subunit protein bL36c (37 aa).

Belongs to the bacterial ribosomal protein bL36 family.

Its subcellular location is the plastid. It localises to the chloroplast. The sequence is that of Large ribosomal subunit protein bL36c from Pelargonium hortorum (Common geranium).